The following is a 388-amino-acid chain: Ferrochelatase (388 aa).

Fe cation contacts are provided by H197 and E278.

It belongs to the ferrochelatase family.

It is found in the cytoplasm. It catalyses the reaction heme b + 2 H(+) = protoporphyrin IX + Fe(2+). It participates in porphyrin-containing compound metabolism; protoheme biosynthesis; protoheme from protoporphyrin-IX: step 1/1. Its function is as follows. Catalyzes the ferrous insertion into protoporphyrin IX. The sequence is that of Ferrochelatase from Thermosynechococcus vestitus (strain NIES-2133 / IAM M-273 / BP-1).